Reading from the N-terminus, the 401-residue chain is Argininosuccinate synthase (401 aa).

8–16 (AYSGGLDTS) contacts ATP. Tyr85 contributes to the L-citrulline binding site. Residue Gly115 participates in ATP binding. L-aspartate-binding residues include Thr117, Asn121, and Asp122. Asn121 provides a ligand contact to L-citrulline. The L-citrulline site is built by Arg125, Ser173, Glu258, and Tyr270.

It belongs to the argininosuccinate synthase family. Type 1 subfamily. As to quaternary structure, homotetramer.

The protein localises to the cytoplasm. The catalysed reaction is L-citrulline + L-aspartate + ATP = 2-(N(omega)-L-arginino)succinate + AMP + diphosphate + H(+). It participates in amino-acid biosynthesis; L-arginine biosynthesis; L-arginine from L-ornithine and carbamoyl phosphate: step 2/3. This is Argininosuccinate synthase from Staphylococcus aureus (strain Mu3 / ATCC 700698).